The primary structure comprises 287 residues: Large ribosomal subunit protein uL2 (287 aa).

The tract at residues 222 to 266 is disordered; the sequence is RGIRPTVRGSAMNPNDHPHGGGEGRSPVGRDAPRTPWGKRHMGVK.

It belongs to the universal ribosomal protein uL2 family. In terms of assembly, part of the 50S ribosomal subunit. Forms a bridge to the 30S subunit in the 70S ribosome.

Its function is as follows. One of the primary rRNA binding proteins. Required for association of the 30S and 50S subunits to form the 70S ribosome, for tRNA binding and peptide bond formation. It has been suggested to have peptidyltransferase activity; this is somewhat controversial. Makes several contacts with the 16S rRNA in the 70S ribosome. The protein is Large ribosomal subunit protein uL2 of Mycoplasma pneumoniae (strain ATCC 29342 / M129 / Subtype 1) (Mycoplasmoides pneumoniae).